The chain runs to 336 residues: Heme A synthase (336 aa).

The next 8 membrane-spanning stretches (helical) occupy residues 5 to 25 (LTRW…VGGI), 92 to 112 (GRAT…KGII), 117 to 137 (ILSY…GWYM), 153 to 173 (LAFH…KLVK), 191 to 211 (LIFS…GALV), 253 to 273 (FIHR…IISL), 284 to 304 (VAFY…ITLL), and 307 to 327 (VPII…SVVI). Histidine 255 lines the heme pocket. A heme-binding site is contributed by histidine 315.

It belongs to the COX15/CtaA family. Type 2 subfamily. As to quaternary structure, interacts with CtaB. Heme b serves as cofactor.

The protein localises to the cell membrane. It carries out the reaction Fe(II)-heme o + 2 A + H2O = Fe(II)-heme a + 2 AH2. It participates in porphyrin-containing compound metabolism; heme A biosynthesis; heme A from heme O: step 1/1. Catalyzes the conversion of heme O to heme A by two successive hydroxylations of the methyl group at C8. The first hydroxylation forms heme I, the second hydroxylation results in an unstable dihydroxymethyl group, which spontaneously dehydrates, resulting in the formyl group of heme A. The sequence is that of Heme A synthase from Rickettsia bellii (strain RML369-C).